Consider the following 321-residue polypeptide: Aspartate carbamoyltransferase catalytic subunit (321 aa).

Positions 65 and 66 each coordinate carbamoyl phosphate. K93 provides a ligand contact to L-aspartate. Carbamoyl phosphate is bound by residues R115, H143, and Q146. Residues R176 and R230 each contribute to the L-aspartate site. G271 and P272 together coordinate carbamoyl phosphate.

It belongs to the aspartate/ornithine carbamoyltransferase superfamily. ATCase family. As to quaternary structure, heterododecamer (2C3:3R2) of six catalytic PyrB chains organized as two trimers (C3), and six regulatory PyrI chains organized as three dimers (R2).

The enzyme catalyses carbamoyl phosphate + L-aspartate = N-carbamoyl-L-aspartate + phosphate + H(+). It functions in the pathway pyrimidine metabolism; UMP biosynthesis via de novo pathway; (S)-dihydroorotate from bicarbonate: step 2/3. In terms of biological role, catalyzes the condensation of carbamoyl phosphate and aspartate to form carbamoyl aspartate and inorganic phosphate, the committed step in the de novo pyrimidine nucleotide biosynthesis pathway. The sequence is that of Aspartate carbamoyltransferase catalytic subunit from Bartonella henselae (strain ATCC 49882 / DSM 28221 / CCUG 30454 / Houston 1) (Rochalimaea henselae).